We begin with the raw amino-acid sequence, 530 residues long: uncharacterized protein (530 aa).

The disordered stretch occupies residues 362–408; that stretch reads NLTPKLNKTNEDIKSDSTSQPQGFPEGNRRVMENPETKVSKTDDEEM. The segment covering 388–403 has biased composition (basic and acidic residues); that stretch reads GNRRVMENPETKVSKT.

The protein belongs to the IIV-6 030L family.

This is an uncharacterized protein from Invertebrate iridescent virus 6 (IIV-6).